The following is a 290-amino-acid chain: Arylamine N-acetyltransferase 2 (290 aa).

The Acyl-thioester intermediate role is filled by C68. The CoA site is built by S103 and G104. 106–107 (IH) contributes to the substrate binding site. Residues H107 and D122 contribute to the active site. Y208 is a CoA binding site.

It belongs to the arylamine N-acetyltransferase family.

The protein resides in the cytoplasm. The catalysed reaction is an arylamine + acetyl-CoA = an N-acetylarylamine + CoA. It carries out the reaction an N-hydroxyarylamine + acetyl-CoA = an N-acetoxyarylamine + CoA. Functionally, catalyzes the N- or O-acetylation of various arylamine and heterocyclic amine substrates, and participates in the detoxification of a plethora of hydrazine and arylamine drugs. This is Arylamine N-acetyltransferase 2 (NAT2) from Mesocricetus auratus (Golden hamster).